The primary structure comprises 268 residues: NH(3)-dependent NAD(+) synthetase (268 aa).

46 to 53 (GVSGGQDS) is an ATP binding site. Position 52 (D52) interacts with Mg(2+). R140 contributes to the deamido-NAD(+) binding site. Residue T160 participates in ATP binding. Residue E165 coordinates Mg(2+). K173 and D180 together coordinate deamido-NAD(+). K189 lines the ATP pocket. Position 260-261 (260-261 (HK)) interacts with deamido-NAD(+).

The protein belongs to the NAD synthetase family. In terms of assembly, homodimer.

It catalyses the reaction deamido-NAD(+) + NH4(+) + ATP = AMP + diphosphate + NAD(+) + H(+). Its pathway is cofactor biosynthesis; NAD(+) biosynthesis; NAD(+) from deamido-NAD(+) (ammonia route): step 1/1. Functionally, catalyzes the ATP-dependent amidation of deamido-NAD to form NAD. Uses ammonia as a nitrogen source. This Buchnera aphidicola subsp. Acyrthosiphon pisum (strain Tuc7) protein is NH(3)-dependent NAD(+) synthetase.